We begin with the raw amino-acid sequence, 429 residues long: Ribosomal RNA small subunit methyltransferase B (429 aa).

S-adenosyl-L-methionine-binding positions include 254 to 260 (CAAPGGK), aspartate 277, aspartate 303, and aspartate 322. Residue cysteine 375 is the Nucleophile of the active site.

Belongs to the class I-like SAM-binding methyltransferase superfamily. RsmB/NOP family.

The protein resides in the cytoplasm. The enzyme catalyses cytidine(967) in 16S rRNA + S-adenosyl-L-methionine = 5-methylcytidine(967) in 16S rRNA + S-adenosyl-L-homocysteine + H(+). Specifically methylates the cytosine at position 967 (m5C967) of 16S rRNA. The chain is Ribosomal RNA small subunit methyltransferase B from Pectobacterium carotovorum subsp. carotovorum (strain PC1).